A 221-amino-acid chain; its full sequence is Membrane protein 0 (221 aa).

The disordered stretch occupies residues 1-22; sequence MATVHYSRRPGTPPVTLTSSPG. The short motif at 44–47 is the PPXY motif element; that stretch reads PPPY. Residues 100-120 traverse the membrane as a helical segment; it reads FLILFGILTLTAVVVAIVAVF.

Belongs to the varicellovirus ORF0 protein family. As to quaternary structure, interacts with host ITCH; this interaction probably mediates ITCH degradation.

The protein localises to the host Golgi apparatus membrane. The chain is Membrane protein 0 from Homo sapiens (Human).